The sequence spans 481 residues: Trigger factor (481 aa).

One can recognise a PPIase FKBP-type domain in the interval Gly161 to Pro298. The tract at residues Asp173–Arg245 is disordered. Residues Glu182 to Glu235 show a composition bias toward acidic residues.

The protein belongs to the FKBP-type PPIase family. Tig subfamily.

The protein localises to the cytoplasm. The catalysed reaction is [protein]-peptidylproline (omega=180) = [protein]-peptidylproline (omega=0). In terms of biological role, involved in protein export. Acts as a chaperone by maintaining the newly synthesized protein in an open conformation. Functions as a peptidyl-prolyl cis-trans isomerase. The sequence is that of Trigger factor from Herpetosiphon aurantiacus (strain ATCC 23779 / DSM 785 / 114-95).